The chain runs to 533 residues: Light-independent protochlorophyllide reductase subunit B (533 aa).

[4Fe-4S] cluster is bound at residue Asp36. The active-site Proton donor is the Asp292. 428–429 (GL) contributes to the substrate binding site.

The protein belongs to the ChlB/BchB/BchZ family. In terms of assembly, protochlorophyllide reductase is composed of three subunits; BchL, BchN and BchB. Forms a heterotetramer of two BchB and two BchN subunits. Requires [4Fe-4S] cluster as cofactor.

The catalysed reaction is chlorophyllide a + oxidized 2[4Fe-4S]-[ferredoxin] + 2 ADP + 2 phosphate = protochlorophyllide a + reduced 2[4Fe-4S]-[ferredoxin] + 2 ATP + 2 H2O. It participates in porphyrin-containing compound metabolism; bacteriochlorophyll biosynthesis (light-independent). Component of the dark-operative protochlorophyllide reductase (DPOR) that uses Mg-ATP and reduced ferredoxin to reduce ring D of protochlorophyllide (Pchlide) to form chlorophyllide a (Chlide). This reaction is light-independent. The NB-protein (BchN-BchB) is the catalytic component of the complex. This Prosthecochloris aestuarii (strain DSM 271 / SK 413) protein is Light-independent protochlorophyllide reductase subunit B.